A 427-amino-acid polypeptide reads, in one-letter code: Cryptic catabolic NAD-specific glutamate dehydrogenase GudB (427 aa).

Substrate is bound by residues Lys80 and Lys107. Residue Lys119 is the Proton donor of the active site. 2 residues coordinate NAD(+): Thr203 and Asn234. Position 361 (Ser361) interacts with substrate.

Belongs to the Glu/Leu/Phe/Val dehydrogenases family. As to quaternary structure, homohexamer.

It carries out the reaction L-glutamate + NAD(+) + H2O = 2-oxoglutarate + NH4(+) + NADH + H(+). Functionally, gudB seems to be intrinsically inactive, however spontaneous mutations removing a 9-bp direct repeat within the wild-type gudB sequence activated the GudB protein and allowed more-efficient utilization of amino acids of the glutamate family (called gutB1). This 3 amino acid insertion presumably causes severe destabilization of the fold of the protein, leading to an inactive enzyme that is very quickly degraded. The cryptic GudB serves as a buffer that may compensate for mutations in the rocG gene and that can also be decryptified for the utilization of glutamate as a single carbon source in the absence of arginine. It is unable to synthesize glutamate. The polypeptide is Cryptic catabolic NAD-specific glutamate dehydrogenase GudB (Bacillus subtilis (strain 168)).